The primary structure comprises 360 residues: Phosphoserine aminotransferase (360 aa).

Residue arginine 42 participates in L-glutamate binding. Pyridoxal 5'-phosphate-binding positions include 76 to 77 (AS), tryptophan 102, threonine 152, aspartate 172, and glutamine 195. The residue at position 196 (lysine 196) is an N6-(pyridoxal phosphate)lysine. Pyridoxal 5'-phosphate is bound at residue 237–238 (NT).

Belongs to the class-V pyridoxal-phosphate-dependent aminotransferase family. SerC subfamily. In terms of assembly, homodimer. Requires pyridoxal 5'-phosphate as cofactor.

The protein resides in the cytoplasm. It catalyses the reaction O-phospho-L-serine + 2-oxoglutarate = 3-phosphooxypyruvate + L-glutamate. It carries out the reaction 4-(phosphooxy)-L-threonine + 2-oxoglutarate = (R)-3-hydroxy-2-oxo-4-phosphooxybutanoate + L-glutamate. It participates in amino-acid biosynthesis; L-serine biosynthesis; L-serine from 3-phospho-D-glycerate: step 2/3. Its function is as follows. Catalyzes the reversible conversion of 3-phosphohydroxypyruvate to phosphoserine and of 3-hydroxy-2-oxo-4-phosphonooxybutanoate to phosphohydroxythreonine. This Bacillus cereus (strain ATCC 10987 / NRS 248) protein is Phosphoserine aminotransferase.